We begin with the raw amino-acid sequence, 112 residues long: Cornifelin homolog (112 aa).

Belongs to the cornifelin family.

This chain is Cornifelin homolog (cnfn), found in Danio rerio (Zebrafish).